A 321-amino-acid chain; its full sequence is uncharacterized protein (321 aa).

The interval 1 to 80 (MQGGQEVGRE…GELSGGWGEF (80 aa)) is disordered.

This is an uncharacterized protein from Mus musculus (Mouse).